Here is a 268-residue protein sequence, read N- to C-terminus: Fc receptor-like protein 6 (268 aa).

Positions 1–16 are cleaved as a signal peptide; sequence MLLWMVLLLCESMAEA. Residues 17 to 215 lie on the Extracellular side of the membrane; sequence QELFPNPELT…TAWIKSNMLP (199 aa). The region spanning 114 to 194 is the Ig-like C2-type domain; sequence PVLTLQHEAT…AKNNISREIS (81 aa). A disulfide bridge links Cys135 with Cys183. 2 N-linked (GlcNAc...) asparagine glycosylation sites follow: Asn180 and Asn188. The chain crosses the membrane as a helical span at residues 216-236; the sequence is IWLPASLLGGMVIAAVVLMYF. At 237 to 268 the chain is on the cytoplasmic side; it reads FKPCKKHARPETPTLKEPDSFLYVSVDNQRYK.

In terms of assembly, interacts with class II MHC.

It is found in the cell membrane. Acts as a MHC class II receptor. When stimulated on its own, does not play a role in cytokine production or the release of cytotoxic granules by NK cells and cytotoxic CD8(+) T cells. Does not act as an Fc receptor. This is Fc receptor-like protein 6 (Fcrl6) from Mus musculus (Mouse).